We begin with the raw amino-acid sequence, 209 residues long: NADH-quinone oxidoreductase subunit C (209 aa).

The protein belongs to the complex I 30 kDa subunit family. As to quaternary structure, NDH-1 is composed of 14 different subunits. Subunits NuoB, C, D, E, F, and G constitute the peripheral sector of the complex.

It localises to the cell inner membrane. The catalysed reaction is a quinone + NADH + 5 H(+)(in) = a quinol + NAD(+) + 4 H(+)(out). Functionally, NDH-1 shuttles electrons from NADH, via FMN and iron-sulfur (Fe-S) centers, to quinones in the respiratory chain. The immediate electron acceptor for the enzyme in this species is believed to be ubiquinone. Couples the redox reaction to proton translocation (for every two electrons transferred, four hydrogen ions are translocated across the cytoplasmic membrane), and thus conserves the redox energy in a proton gradient. The sequence is that of NADH-quinone oxidoreductase subunit C from Xanthobacter autotrophicus (strain ATCC BAA-1158 / Py2).